A 108-amino-acid chain; its full sequence is Ig kappa chain V-V region HP 123E6 (108 aa).

Positions 1–23 are framework-1; it reads DIQMTQSTSSLSASLGDRVTISC. C23 and C88 are joined by a disulfide. Positions 24 to 34 are complementarity-determining-1; the sequence is RASQDISNYLN. Residues 35 to 49 are framework-2; sequence WYQQKPDGTVKLLIY. A complementarity-determining-2 region spans residues 50–56; that stretch reads YTSRLHS. The interval 57 to 88 is framework-3; it reads GVPSRFSGSGSGTDYSLTISNLEQEDIATYFC. The tract at residues 89-97 is complementarity-determining-3; that stretch reads QQGYMLPRT. The tract at residues 98-108 is framework-4; it reads FGGGTKLEIKR.

This chain is Ig kappa chain V-V region HP 123E6, found in Mus musculus (Mouse).